The chain runs to 332 residues: Formamidase (332 aa).

Positions Phe-14 to Pro-259 constitute a CN hydrolase domain. Glu-60 acts as the Proton acceptor in catalysis. The Proton donor role is filled by Lys-132. The active-site Nucleophile is the Cys-165.

This sequence belongs to the carbon-nitrogen hydrolase superfamily. Aliphatic amidase family.

It catalyses the reaction formamide + H2O = formate + NH4(+). In terms of biological role, is an aliphatic amidase with a restricted substrate specificity, as it only hydrolyzes formamide. The sequence is that of Formamidase from Bacillus thuringiensis (strain Al Hakam).